The following is a 347-amino-acid chain: Mitochondrial genome maintenance exonuclease 1 (347 aa).

Residues Asp246, Asp259, and Lys261 contribute to the active site.

Belongs to the MGME1 family.

The protein localises to the mitochondrion. Single-stranded DNA (ssDNA) metal-dependent exonuclease involved in mitochondrial genome maintenance. Has preference for 5'-3' exonuclease activity. Necessary for maintenance of proper 7S DNA levels. Probably involved in mitochondrial DNA (mtDNA) repair. Specifically binds 5-hydroxymethylcytosine (5hmC)-containing DNA in stem cells. This is Mitochondrial genome maintenance exonuclease 1 (mgme1) from Xenopus tropicalis (Western clawed frog).